A 100-amino-acid polypeptide reads, in one-letter code: Elastin (100 aa).

2 positions are modified to 4-hydroxyproline: proline 72 and proline 86. An intrachain disulfide couples cysteine 90 to cysteine 95.

It belongs to the elastin family. In terms of assembly, the polymeric elastin chains are cross-linked together into an extensible 3D network. Forms a ternary complex with BGN and MFAP2. Interacts with MFAP2 via divalent cations (calcium &gt; magnesium &gt; manganese) in a dose-dependent and saturating manner. Interacts with FBLN5 and FBN1. Forms a ternary complex with FBN1 and FBLN2 or FBLN5. Interacts with MFAP4 in a Ca (2+)-dependent manner; this interaction promotes ELN self-assembly. Interacts with EFEMP2 with moderate affinity. Post-translationally, elastin is formed through the cross-linking of its soluble precursor tropoelastin. Cross-linking is initiated through the action of lysyl oxidase on exposed lysines to form allysine. Subsequent spontaneous condensation reactions with other allysine or unmodified lysine residues result in various bi-, tri-, and tetrafunctional cross-links. The most abundant cross-links in mature elastin fibers are lysinonorleucine, allysine aldol, desmosine, and isodesmosine. In terms of processing, hydroxylation on proline residues within the sequence motif, GXPG, is most likely to be 4-hydroxy as this fits the requirement for 4-hydroxylation in vertebrates.

The protein resides in the secreted. It localises to the extracellular space. The protein localises to the extracellular matrix. Major structural protein of tissues such as aorta and nuchal ligament, which must expand rapidly and recover completely. Molecular determinant of the late arterial morphogenesis, stabilizing arterial structure by regulating proliferation and organization of vascular smooth muscle. The polypeptide is Elastin (ELN) (Ovis aries (Sheep)).